A 293-amino-acid polypeptide reads, in one-letter code: Phosphatidylglycerol--prolipoprotein diacylglyceryl transferase (293 aa).

Transmembrane regions (helical) follow at residues 45 to 65 (FELR…YFVA), 81 to 101 (ELIF…YVLF), 115 to 135 (IWEG…TGFL), and 144 to 164 (FTFL…QAIG). R165 serves as a coordination point for a 1,2-diacyl-sn-glycero-3-phospho-(1'-sn-glycerol). The next 3 membrane-spanning stretches (helical) occupy residues 204–224 (PTFL…SVYF), 231–249 (HGEV…RIVI), and 262–282 (IKAA…GFLI).

The protein belongs to the Lgt family.

Its subcellular location is the cell inner membrane. It catalyses the reaction L-cysteinyl-[prolipoprotein] + a 1,2-diacyl-sn-glycero-3-phospho-(1'-sn-glycerol) = an S-1,2-diacyl-sn-glyceryl-L-cysteinyl-[prolipoprotein] + sn-glycerol 1-phosphate + H(+). It participates in protein modification; lipoprotein biosynthesis (diacylglyceryl transfer). In terms of biological role, catalyzes the transfer of the diacylglyceryl group from phosphatidylglycerol to the sulfhydryl group of the N-terminal cysteine of a prolipoprotein, the first step in the formation of mature lipoproteins. This chain is Phosphatidylglycerol--prolipoprotein diacylglyceryl transferase, found in Thermotoga maritima (strain ATCC 43589 / DSM 3109 / JCM 10099 / NBRC 100826 / MSB8).